A 254-amino-acid polypeptide reads, in one-letter code: Small ribosomal subunit protein uS2 (254 aa).

This sequence belongs to the universal ribosomal protein uS2 family.

The polypeptide is Small ribosomal subunit protein uS2 (Legionella pneumophila subsp. pneumophila (strain Philadelphia 1 / ATCC 33152 / DSM 7513)).